The chain runs to 134 residues: Profilin-3 (134 aa).

Cysteine 13 and cysteine 118 form a disulfide bridge. Residues 84 to 100 carry the Involved in PIP2 interaction motif; it reads AVIRGKKGSGGITIKKT. Threonine 114 carries the phosphothreonine modification.

Belongs to the profilin family. As to quaternary structure, occurs in many kinds of cells as a complex with monomeric actin in a 1:1 ratio. Phosphorylated by MAP kinases.

It localises to the cytoplasm. Its subcellular location is the cytoskeleton. Its function is as follows. Binds to actin and affects the structure of the cytoskeleton. At high concentrations, profilin prevents the polymerization of actin, whereas it enhances it at low concentrations. In Olea europaea (Common olive), this protein is Profilin-3.